We begin with the raw amino-acid sequence, 297 residues long: Cell division protein ZipA (297 aa).

Position 1 (Met1) is a topological domain, periplasmic. The chain crosses the membrane as a helical span at residues 2–22 (EIGLREWLILIGIIVIAGILF). Residues 23 to 297 (DGWRRMRGGK…FERRALTQKR (275 aa)) lie on the Cytoplasmic side of the membrane. The interval 48-151 (DEEGGSAEVL…AAPASNSVKE (104 aa)) is disordered. A compositionally biased stretch (basic and acidic residues) spans 83–92 (ARDREREPKP). Positions 124–133 (LFSDSDDDFA) are enriched in acidic residues.

Belongs to the ZipA family. As to quaternary structure, interacts with FtsZ via their C-terminal domains.

It is found in the cell inner membrane. Essential cell division protein that stabilizes the FtsZ protofilaments by cross-linking them and that serves as a cytoplasmic membrane anchor for the Z ring. Also required for the recruitment to the septal ring of downstream cell division proteins. The polypeptide is Cell division protein ZipA (Pseudomonas putida (strain ATCC 47054 / DSM 6125 / CFBP 8728 / NCIMB 11950 / KT2440)).